The primary structure comprises 230 residues: Acyl-protein thioesterase 1 (230 aa).

Residues serine 119, aspartate 174, and histidine 208 each act as charge relay system in the active site. Lysine 224 carries the N6-acetyllysine modification.

The protein belongs to the AB hydrolase superfamily. AB hydrolase 2 family. As to quaternary structure, homodimer. As to expression, ubiquitous. Detected at low levels in all tissues tested.

It localises to the cytoplasm. Its subcellular location is the cell membrane. The protein resides in the nucleus membrane. It is found in the endoplasmic reticulum. It carries out the reaction S-hexadecanoyl-L-cysteinyl-[protein] + H2O = L-cysteinyl-[protein] + hexadecanoate + H(+). The enzyme catalyses 1-hexadecanoyl-sn-glycero-3-phosphocholine + H2O = sn-glycerol 3-phosphocholine + hexadecanoate + H(+). It catalyses the reaction a 1-(9Z-octadecenoyl)-2-acyl-sn-glycero-3-phosphocholine + H2O = a 2-acyl-sn-glycero-3-phosphocholine + (9Z)-octadecenoate + H(+). Functionally, acts as an acyl-protein thioesterase. Hydrolyzes fatty acids from S-acylated cysteine residues in proteins such as trimeric G alpha proteins or HRAS. Acts as a palmitoyl thioesterase that catalyzes depalmitoylation of proteins, such as ADRB2, KCNMA1 and SQSTM1. Acts as a negative regulator of autophagy by mediating palmitoylation of SQSTM1, decreasing affinity between SQSTM1 and ATG8 proteins and recruitment of ubiquitinated cargo proteins to autophagosomes. Acts as a lysophospholipase and hydrolyzes lysophosphatidylcholine (lyso-PC). Also hydrolyzes lysophosphatidylethanolamine (lyso-PE), lysophosphatidylinositol (lyso-PI) and lysophosphatidylserine (lyso-PS). Has much higher thioesterase activity than lysophospholipase activity. Contributes to the production of lysophosphatidic acid (LPA) during blood coagulation by recognizing and cleaving plasma phospholipids to generate lysophospholipids which in turn act as substrates for ENPP2 to produce LPA. The sequence is that of Acyl-protein thioesterase 1 (Lypla1) from Rattus norvegicus (Rat).